The chain runs to 284 residues: MKLDGYTRLAAVVANPIKHSISPFIHNRAFEATDTNGAYVAWEIEASDLVETVANIRRYQMFGINLSMPYKEQVIPYLDKLSDEARLIGAVNTVVNENGNLIGYNTDGKGFFKCLPSFTISGKKMTLLGAGGAAKSILAQAILDGVSQISVFVRSVSMEKTRPYLDKLQEQTGFKVDLCALEYVSELQARIAESDLLVNATSVGMDGQSSPVPENIVLPETLLVADIIYQPFETPFLKWARSQGNPAVNGLGMLLYQAAEAFQLWTGKEMPTEEIWQSLTEKYQ.

Residues 20 to 22 (SIS) and serine 67 each bind shikimate. The Proton acceptor role is filled by lysine 71. Aspartate 83 serves as a coordination point for NADP(+). Shikimate is bound by residues asparagine 92 and aspartate 107. Residues 129–133 (GAGGA) and isoleucine 227 contribute to the NADP(+) site. Tyrosine 229 is a shikimate binding site. Residue glycine 250 coordinates NADP(+).

It belongs to the shikimate dehydrogenase family. As to quaternary structure, homodimer.

The enzyme catalyses shikimate + NADP(+) = 3-dehydroshikimate + NADPH + H(+). It participates in metabolic intermediate biosynthesis; chorismate biosynthesis; chorismate from D-erythrose 4-phosphate and phosphoenolpyruvate: step 4/7. Involved in the biosynthesis of the chorismate, which leads to the biosynthesis of aromatic amino acids. Catalyzes the reversible NADPH linked reduction of 3-dehydroshikimate (DHSA) to yield shikimate (SA). The polypeptide is Shikimate dehydrogenase (NADP(+)) (Streptococcus pneumoniae (strain P1031)).